The chain runs to 306 residues: Methionyl-tRNA formyltransferase (306 aa).

A (6S)-5,6,7,8-tetrahydrofolate-binding site is contributed by 108–111; the sequence is SLLP.

The protein belongs to the Fmt family.

It catalyses the reaction L-methionyl-tRNA(fMet) + (6R)-10-formyltetrahydrofolate = N-formyl-L-methionyl-tRNA(fMet) + (6S)-5,6,7,8-tetrahydrofolate + H(+). Its function is as follows. Attaches a formyl group to the free amino group of methionyl-tRNA(fMet). The formyl group appears to play a dual role in the initiator identity of N-formylmethionyl-tRNA by promoting its recognition by IF2 and preventing the misappropriation of this tRNA by the elongation apparatus. This Pseudarthrobacter chlorophenolicus (strain ATCC 700700 / DSM 12829 / CIP 107037 / JCM 12360 / KCTC 9906 / NCIMB 13794 / A6) (Arthrobacter chlorophenolicus) protein is Methionyl-tRNA formyltransferase.